A 317-amino-acid polypeptide reads, in one-letter code: MERMLFLSPPSLAAHPEKLSTILSAHAQYSTELQMLDRLAAGLVSLPESTYDIVMFLIDADCLKTGSTPRMSRGVIESIVRALRPGGKLKSEHGLFASPDYPDRTELVLAGLVFDDNGDLVKPNFGAQDTVPLKLGKKKKATPAASSGDGAEANGVTVNMPIATDSKRNGQGAAVQGLGFVDFSDDLDLPPEDDDELIDEEALMDEEDMGRPIVQPPECRPKAGKRRRACKDCTCGLAERLHEEDTAKRANADAALETLKLGSNDLAEVDFTVQGKMGSCGNCALGDAFRCDGCPYIGLPPFKPGEEVRLLSNDVQL.

An N-terminal SAM-like domain region spans residues 1 to 131 (MERMLFLSPP…KPNFGAQDTV (131 aa)). The linker stretch occupies residues 132–209 (PLKLGKKKKA…EEALMDEEDM (78 aa)). [2Fe-2S] cluster-binding residues include Cys-219, Cys-230, Cys-233, and Cys-235. Residues 219 to 235 (CRPKAGKRRRACKDCTC) form a fe-S binding site A region. [4Fe-4S] cluster-binding residues include Cys-280, Cys-283, Cys-291, and Cys-294. Short sequence motifs (cx2C motif) lie at residues 280-283 (CGNC) and 291-294 (CDGC). Residues 280–294 (CGNCALGDAFRCDGC) form a fe-S binding site B region.

This sequence belongs to the anamorsin family. Monomer. Interacts with TAH18. Interacts with MIA40. It depends on [2Fe-2S] cluster as a cofactor. [4Fe-4S] cluster serves as cofactor.

It localises to the cytoplasm. Its subcellular location is the mitochondrion intermembrane space. Component of the cytosolic iron-sulfur (Fe-S) protein assembly (CIA) machinery required for the maturation of extramitochondrial Fe-S proteins. Part of an electron transfer chain functioning in an early step of cytosolic Fe-S biogenesis, facilitating the de novo assembly of a [4Fe-4S] cluster on the scaffold complex CFD1-NBP35. Electrons are transferred to DRE2 from NADPH via the FAD- and FMN-containing protein TAH18. TAH18-DRE2 are also required for the assembly of the diferric tyrosyl radical cofactor of ribonucleotide reductase (RNR), probably by providing electrons for reduction during radical cofactor maturation in the catalytic small subunit RNR2. The protein is Fe-S cluster assembly protein DRE2 of Uncinocarpus reesii (strain UAMH 1704).